We begin with the raw amino-acid sequence, 241 residues long: C-type lectin domain family 9 member A (241 aa).

Residues M1–C34 lie on the Cytoplasmic side of the membrane. An ITAM-like motif is present at residues E5–L10. A helical; Signal-anchor for type II membrane protein transmembrane segment spans residues I35–G55. Over I56 to I241 the chain is Extracellular. N-linked (GlcNAc...) asparagine glycans are attached at residues N81 and N88. C113 and C124 form a disulfide bridge. The C-type lectin domain maps to N120–E233. N135, N161, and N223 each carry an N-linked (GlcNAc...) asparagine glycan. 2 disulfide bridges follow: C141–C232 and C211–C224.

As to quaternary structure, homodimer. Post-translationally, N-glycosylated. High expression in the spleen, moderate to low levels in several other tissues and cell types, but no detectable expression in skin dendritic cells or CD4(+) T-cells.

The protein resides in the membrane. Functionally, functions as an endocytic receptor on a small subset of myeloid cells specialized for the uptake and processing of material from dead cells. Recognizes filamentous form of actin in association with particular actin-binding domains of cytoskeletal proteins, including spectrin, exposed when cell membranes are damaged, and mediate the cross-presentation of dead-cell associated antigens in a Syk-dependent manner. This is C-type lectin domain family 9 member A (Clec9a) from Rattus norvegicus (Rat).